We begin with the raw amino-acid sequence, 159 residues long: 6,7-dimethyl-8-ribityllumazine synthase (159 aa).

Residues tryptophan 26, 57–59 (ALE), and 79–81 (CVI) each bind 5-amino-6-(D-ribitylamino)uracil. 84-85 (GT) lines the (2S)-2-hydroxy-3-oxobutyl phosphate pocket. Residue histidine 87 is the Proton donor of the active site. Residue asparagine 112 participates in 5-amino-6-(D-ribitylamino)uracil binding. Arginine 126 contacts (2S)-2-hydroxy-3-oxobutyl phosphate.

This sequence belongs to the DMRL synthase family.

It carries out the reaction (2S)-2-hydroxy-3-oxobutyl phosphate + 5-amino-6-(D-ribitylamino)uracil = 6,7-dimethyl-8-(1-D-ribityl)lumazine + phosphate + 2 H2O + H(+). It functions in the pathway cofactor biosynthesis; riboflavin biosynthesis; riboflavin from 2-hydroxy-3-oxobutyl phosphate and 5-amino-6-(D-ribitylamino)uracil: step 1/2. Catalyzes the formation of 6,7-dimethyl-8-ribityllumazine by condensation of 5-amino-6-(D-ribitylamino)uracil with 3,4-dihydroxy-2-butanone 4-phosphate. This is the penultimate step in the biosynthesis of riboflavin. The chain is 6,7-dimethyl-8-ribityllumazine synthase from Corynebacterium efficiens (strain DSM 44549 / YS-314 / AJ 12310 / JCM 11189 / NBRC 100395).